The chain runs to 561 residues: Amidophosphoribosyltransferase 2, chloroplastic (561 aa).

Residues 1–27 (MAATSSISSSLSLNAKPNKLSNNNNNN) show a composition bias toward low complexity. Residues 1–36 (MAATSSISSSLSLNAKPNKLSNNNNNNKPHRFLRNP) are disordered. A chloroplast-targeting transit peptide spans 1 to 53 (MAATSSISSSLSLNAKPNKLSNNNNNNKPHRFLRNPFLNPSSSSFSPLPASIS). Cys-87 functions as the Nucleophile in the catalytic mechanism. The Glutamine amidotransferase type-2 domain maps to 87–307 (CGVVGIYGDS…PGEVLVVDKD (221 aa)). [4Fe-4S] cluster-binding residues include Cys-323, Cys-469, Cys-520, and Cys-523.

The protein in the C-terminal section; belongs to the purine/pyrimidine phosphoribosyltransferase family. Requires [4Fe-4S] cluster as cofactor. Mg(2+) serves as cofactor. In terms of tissue distribution, mostly expressed in leaves, and, to a lower extent, in cotyledons.

Its subcellular location is the plastid. It localises to the chloroplast stroma. It catalyses the reaction 5-phospho-beta-D-ribosylamine + L-glutamate + diphosphate = 5-phospho-alpha-D-ribose 1-diphosphate + L-glutamine + H2O. The protein operates within purine metabolism; IMP biosynthesis via de novo pathway; N(1)-(5-phospho-D-ribosyl)glycinamide from 5-phospho-alpha-D-ribose 1-diphosphate: step 1/2. Its activity is regulated as follows. Inhibited by the phenyltriazole acetic acid compound [5-(4-chlorophenyl)-1-isopropyl-1H-[1,2,4]triazol-3-yl]-acetic acid (DAS734), a bleaching herbicide. Functionally, catalyzes the first committed step of 'de novo purine biosynthesis from glutamine. Required for chloroplast biogenesis and cell division. Confers sensitivity to the phenyltriazole acetic acid compound [5-(4-chlorophenyl)-1-isopropyl-1H-[1,2,4]triazol-3-yl]-acetic acid (DAS734), a bleaching herbicide. The polypeptide is Amidophosphoribosyltransferase 2, chloroplastic (ASE2) (Arabidopsis thaliana (Mouse-ear cress)).